Reading from the N-terminus, the 136-residue chain is Purkinje cell protein 2 homolog (136 aa).

Disordered regions lie at residues 1–64 (MMDQ…PEMD) and 86–136 (SSLP…TQAP). A GoLoco 1 domain is found at 23 to 45 (QEGFFNLLSHVQGDRMEGQRCSL). Over residues 49–59 (PGQTTKSQSDP) the composition is skewed to polar residues. Positions 63 to 85 (MDSLMDMLASTQGRRMDDQRVTV) constitute a GoLoco 2 domain. Positions 107-117 (LSPQPLLTPQD) are enriched in polar residues. Ser-127 carries the post-translational modification Phosphoserine.

May function as a cell-type specific modulator for G protein-mediated cell signaling. The sequence is that of Purkinje cell protein 2 homolog (PCP2) from Homo sapiens (Human).